The chain runs to 130 residues: Small ribosomal subunit protein uS9 (130 aa).

The disordered stretch occupies residues 107–130 (DSREVERKKVGLRKARRRPQFSKR). Basic residues predominate over residues 116 to 130 (VGLRKARRRPQFSKR).

This sequence belongs to the universal ribosomal protein uS9 family.

The sequence is that of Small ribosomal subunit protein uS9 from Marinomonas sp. (strain MWYL1).